A 65-amino-acid polypeptide reads, in one-letter code: Large ribosomal subunit protein bL31 (65 aa).

Positions 16, 18, 36, and 39 each coordinate Zn(2+).

It belongs to the bacterial ribosomal protein bL31 family. Type A subfamily. As to quaternary structure, part of the 50S ribosomal subunit. Zn(2+) is required as a cofactor.

Its function is as follows. Binds the 23S rRNA. This is Large ribosomal subunit protein bL31 from Geobacter sulfurreducens (strain ATCC 51573 / DSM 12127 / PCA).